Consider the following 94-residue polypeptide: Selenoprotein K (94 aa).

Residues 20–42 form a helical membrane-spanning segment; sequence VSFLTDFFWGIAEFVVFFFKTLL. The interval 46–94 is disordered; sequence VKKRRGYGSSSDSRYDDGRGPPGNPPRRMGRISHLRGPSPPPMAGGUGR. U92 is a non-standard amino acid (selenocysteine).

The protein belongs to the selenoprotein K family. Interacts with DERL1, DERL2, DERL3 and SELENOS. The SELENOK-SELENOS complex interacts with VCP. Interacts with ZDHHC6. Post-translationally, cleaved by CAPN2/m-calpain in resting macrophages but not in activated macrophages. Macrophage activation up-regulates expression of the calpain inhibitor CAST/calpastatin, resulting in inhibition of CAPN2 activity. In terms of processing, truncated SELENOK proteins produced by failed UGA/Sec decoding are ubiquitinated by the CRL2(KLHDC2) complex, which recognizes the diglycine (Gly-Gly) at the C-terminus of truncated SELENOK proteins. In terms of tissue distribution, high expression in spleen and intestine (at protein level). Expressed in a range of immune cells including T and B-cells and also in myeloid cells including macrophages, neutrophils and dendritic cells (at protein level).

The protein localises to the endoplasmic reticulum membrane. The protein resides in the cell membrane. In terms of biological role, required for Ca(2+) flux in immune cells and plays a role in T-cell proliferation and in T-cell and neutrophil migration. Involved in endoplasmic reticulum-associated degradation (ERAD) of soluble glycosylated proteins. Required for palmitoylation and cell surface expression of CD36 and involved in macrophage uptake of low-density lipoprotein and in foam cell formation. Together with ZDHHC6, required for palmitoylation of ITPR1 in immune cells, leading to regulate ITPR1 stability and function. Plays a role in protection of cells from ER stress-induced apoptosis. Protects cells from oxidative stress when overexpressed in cardiomyocytes. The polypeptide is Selenoprotein K (Mus musculus (Mouse)).